The chain runs to 142 residues: Coactosin-like protein (142 aa).

An N-acetylalanine modification is found at Ala-2. One can recognise an ADF-H domain in the interval Ala-2–Lys-130. A flexible and important for F-actin binding region spans residues Thr-66–Lys-75. Lys-102 and Lys-126 each carry N6-acetyllysine.

The protein belongs to the actin-binding proteins ADF family. Coactosin subfamily. As to quaternary structure, interacts with 5-lipoxygenase (ALOX5/5LO) in a calcium-independent manner. Binds to F-actin with a stoichiometry of 1:2.

It localises to the cytoplasm. The protein localises to the cytoskeleton. The protein resides in the nucleus. Functionally, binds to F-actin in a calcium-independent manner. Has no direct effect on actin depolymerization. Acts as a chaperone for ALOX5 (5LO), influencing both its stability and activity in leukotrienes synthesis. This Bos taurus (Bovine) protein is Coactosin-like protein (COTL1).